Reading from the N-terminus, the 433-residue chain is Glutamate-1-semialdehyde 2,1-aminomutase (433 aa).

An N6-(pyridoxal phosphate)lysine modification is found at K273.

It belongs to the class-III pyridoxal-phosphate-dependent aminotransferase family. HemL subfamily. In terms of assembly, homodimer. Pyridoxal 5'-phosphate serves as cofactor.

It localises to the cytoplasm. The catalysed reaction is (S)-4-amino-5-oxopentanoate = 5-aminolevulinate. It functions in the pathway porphyrin-containing compound metabolism; protoporphyrin-IX biosynthesis; 5-aminolevulinate from L-glutamyl-tRNA(Glu): step 2/2. The protein operates within porphyrin-containing compound metabolism; chlorophyll biosynthesis. This is Glutamate-1-semialdehyde 2,1-aminomutase (hemL) from Synechocystis sp. (strain ATCC 27184 / PCC 6803 / Kazusa).